We begin with the raw amino-acid sequence, 309 residues long: Nudix hydrolase 14, chloroplastic (309 aa).

The N-terminal 60 residues, 1–60 (MAGFTLLPSRLLAFPSRALPRRLHHHHAKLILRCKMSSSSSSLTQSITLPSQPNEPVLVS), are a transit peptide targeting the chloroplast. The Nudix hydrolase domain maps to 139 to 292 (ARGPAVAVLI…KVLMSIGLYE (154 aa)). Positions 179-200 (MLDDDKGDFVGTAVREVEEEIG) match the Nudix box motif. Mg(2+) contacts are provided by Glu194 and Glu198.

It belongs to the Nudix hydrolase family. As to quaternary structure, homodimer. The cofactor is Mg(2+). Mn(2+) serves as cofactor. In terms of tissue distribution, expressed in roots, leaves, stems and inflorescences.

Its subcellular location is the plastid. It is found in the chloroplast. The catalysed reaction is ADP-sugar + H2O = AMP + alpha-D-aldose 1-phosphate.. Its function is as follows. Mediates the hydrolysis of some nucleoside diphosphate derivatives. Can use ADP-glucose, ADP-mannose and ADP-ribose as substrates. Regulates the intracellular ADP-glucose levels linked to starch biosynthesis. The chain is Nudix hydrolase 14, chloroplastic (NUDT14) from Arabidopsis thaliana (Mouse-ear cress).